The chain runs to 259 residues: MTDLKASSLRALKLMDLTTLNDDDTNEKVIALCHQAKTPVGNTAAVCIYPRFIPIARKTLNEQGTPDIRIATVTNFPHGNDDIDIALAETRAAIAYGADEVDVVFPYRALIAGNEQVGFELVKACKEACAAANVLLKVIIETGELKEEALIRKASEISIKAGADFIKTSTGKVPVNATPESARIMMEVIRDMGVEKTVGFKPAGGVRSAEDAQQFLAIADELFGADWADSRHYRFGASSLLASLLKALGHGDGKSASSY.

D102 serves as the catalytic Proton donor/acceptor. K167 acts as the Schiff-base intermediate with acetaldehyde in catalysis. K201 functions as the Proton donor/acceptor in the catalytic mechanism.

It belongs to the DeoC/FbaB aldolase family. DeoC type 2 subfamily.

The protein localises to the cytoplasm. It carries out the reaction 2-deoxy-D-ribose 5-phosphate = D-glyceraldehyde 3-phosphate + acetaldehyde. Its pathway is carbohydrate degradation; 2-deoxy-D-ribose 1-phosphate degradation; D-glyceraldehyde 3-phosphate and acetaldehyde from 2-deoxy-alpha-D-ribose 1-phosphate: step 2/2. Functionally, catalyzes a reversible aldol reaction between acetaldehyde and D-glyceraldehyde 3-phosphate to generate 2-deoxy-D-ribose 5-phosphate. This chain is Deoxyribose-phosphate aldolase, found in Klebsiella pneumoniae (strain 342).